Here is a 610-residue protein sequence, read N- to C-terminus: Glutamine--fructose-6-phosphate aminotransferase [isomerizing] (610 aa).

Catalysis depends on Cys-2, which acts as the Nucleophile; for GATase activity. In terms of domain architecture, Glutamine amidotransferase type-2 spans Cys-2–Lys-220. 2 SIS domains span residues Ala-289–Asn-429 and Leu-461–Pro-600. Residue Lys-605 is the For Fru-6P isomerization activity of the active site.

As to quaternary structure, homodimer.

Its subcellular location is the cytoplasm. The catalysed reaction is D-fructose 6-phosphate + L-glutamine = D-glucosamine 6-phosphate + L-glutamate. Functionally, catalyzes the first step in hexosamine metabolism, converting fructose-6P into glucosamine-6P using glutamine as a nitrogen source. This is Glutamine--fructose-6-phosphate aminotransferase [isomerizing] from Buchnera aphidicola subsp. Baizongia pistaciae (strain Bp).